A 460-amino-acid chain; its full sequence is Muscarinic acetylcholine receptor M1 (460 aa).

Over 1 to 22 (MNTSAPPAVSPNITVLAPGKGP) the chain is Extracellular. N-linked (GlcNAc...) asparagine glycosylation is found at Asn-2 and Asn-12. A helical membrane pass occupies residues 23–48 (WQVAFIGITTGLLSLATVTGNLLVLI). Residues 49–62 (SFKVNTELKTVNNY) are Cytoplasmic-facing. A helical transmembrane segment spans residues 63–84 (FLLSLACADLIIGTFSMNLYTT). At 85-95 (YLLMGHWALGT) the chain is on the extracellular side. A helical transmembrane segment spans residues 96–121 (LACDLWLALDYVASNASVMNLLLISF). Residues Cys-98 and Cys-178 are joined by a disulfide bond. Residues 122–142 (DRYFSVTRPLSYRAKRTPRRA) lie on the Cytoplasmic side of the membrane. The helical transmembrane segment at 143–164 (ALMIGLAWLVSFVLWAPAILFW) threads the bilayer. The Extracellular segment spans residues 165-185 (QYLVGERTVLAGQCYIQFLSQ). A helical membrane pass occupies residues 186 to 209 (PIITFGTAMAAFYLPVTVMCTLYW). Over 210–366 (RIYRETESRA…LVKEKKAART (157 aa)) the chain is Cytoplasmic. Disordered stretches follow at residues 225–256 (LQGS…GTPP), 274–297 (WKEE…EEPG), and 310–351 (EAQA…QLAK). Thr-230 is subject to Phosphothreonine. The span at 238–247 (SSSSERSQPG) shows a compositional bias: low complexity. Residues 328–343 (RPTKKGRDRAGKGQKP) are compositionally biased toward basic residues. Residues 367 to 390 (LSAILLAFILTWTPYNIMVLVSTF) form a helical membrane-spanning segment. The Extracellular segment spans residues 391 to 397 (CKDCVPE). A helical transmembrane segment spans residues 398 to 420 (TLWELGYWLCYVNSTINPMCYAL). The Cytoplasmic portion of the chain corresponds to 421–460 (CNKAFRDTFRLLLLCRWDKRRWRKIPKRPGSVHRTPSRQC). Residue Thr-428 is modified to Phosphothreonine. Ser-451 carries the post-translational modification Phosphoserine. The residue at position 455 (Thr-455) is a Phosphothreonine. Ser-457 is modified (phosphoserine).

This sequence belongs to the G-protein coupled receptor 1 family. Muscarinic acetylcholine receptor subfamily. CHRM1 sub-subfamily. In terms of assembly, interacts with GPRASP2. Interacts with TMEM147.

Its subcellular location is the cell membrane. It is found in the postsynaptic cell membrane. In terms of biological role, the muscarinic acetylcholine receptor mediates various cellular responses, including inhibition of adenylate cyclase, breakdown of phosphoinositides and modulation of potassium channels through the action of G proteins. Primary transducing effect is Pi turnover. The chain is Muscarinic acetylcholine receptor M1 (CHRM1) from Pongo abelii (Sumatran orangutan).